A 160-amino-acid polypeptide reads, in one-letter code: V-type proton ATPase subunit c (160 aa).

At Met1–Tyr8 the chain is on the vacuolar side. A helical membrane pass occupies residues Ala9 to Gly31. Over Thr32–Asn53 the chain is Cytoplasmic. Residues Ile54–Val74 form a helical membrane-spanning segment. Over Cys75 to Gln90 the chain is Vacuolar. A helical membrane pass occupies residues Leu91–Gly112. The Cytoplasmic segment spans residues Asp113–Arg124. A helical transmembrane segment spans residues Leu125–Leu150. Residues Asn151–Cys160 lie on the Vacuolar side of the membrane.

Belongs to the V-ATPase proteolipid subunit family. In terms of assembly, V-ATPase is a heteromultimeric enzyme composed of a peripheral catalytic V1 complex (components A to H) attached to an integral membrane V0 proton pore complex (components: a, c, c', c'', d, e, f and VOA1). The decameric c-ring forms the proton-conducting pore, and is composed of eight proteolipid subunits c, one subunit c' and one subunit c''.

The protein resides in the vacuole membrane. Proton-conducting pore forming subunit of the V0 complex of vacuolar(H+)-ATPase (V-ATPase), a multisubunit enzyme composed of a peripheral complex (V1) that hydrolyzes ATP and a membrane integral complex (V0) that translocates protons. V-ATPase is responsible for acidifying and maintaining the pH of intracellular compartments. This is V-type proton ATPase subunit c (VMA3) from Saccharomyces cerevisiae (strain ATCC 204508 / S288c) (Baker's yeast).